The primary structure comprises 277 residues: Ubiquinone biosynthesis protein COQ4, mitochondrial (277 aa).

A mitochondrion-targeting transit peptide spans 1–14 (MLTKRALRTTDPYR). 4 residues coordinate Zn(2+): H157, D158, H161, and E173.

The protein belongs to the COQ4 family. As to quaternary structure, component of a multi-subunit COQ enzyme complex, composed of at least COQ3, COQ4, COQ5, COQ6, COQ7 and COQ9. Zn(2+) is required as a cofactor.

It localises to the mitochondrion inner membrane. It catalyses the reaction a 4-hydroxy-3-methoxy-5-(all-trans-polyprenyl)benzoate + H(+) = a 2-methoxy-6-(all-trans-polyprenyl)phenol + CO2. It functions in the pathway cofactor biosynthesis; ubiquinone biosynthesis. In terms of biological role, lyase that catalyzes the C1-decarboxylation of 4-hydroxy-3-methoxy-5-(all-trans-polyprenyl)benzoic acid into 2-methoxy-6-(all-trans-polyprenyl)phenol during ubiquinone biosynthesis. The polypeptide is Ubiquinone biosynthesis protein COQ4, mitochondrial (Ajellomyces capsulatus (strain NAm1 / WU24) (Darling's disease fungus)).